The sequence spans 392 residues: Pannexin-3 (392 aa).

Over 1–39 (MSLAHTAAEYMLSDALLPDRRGSRLKGLRLELPLDKMVK) the chain is Cytoplasmic. The chain crosses the membrane as a helical span at residues 40–60 (FITVGFPLLLMSLAFAQEFSS). Residues 61–113 (GSPISCFSPSNFSVRQAAYVDSSCWDSLAHHTQDKAGQYKVKSLWPHKALPYS) lie on the Extracellular side of the membrane. N-linked (GlcNAc...) asparagine glycosylation is present at Asn-71. The chain crosses the membrane as a helical span at residues 114 to 134 (LLALAVAMYLPVLLWQYVAVP). The Cytoplasmic portion of the chain corresponds to 135 to 215 (SLSSDLLFII…VATYLLRNAL (81 aa)). A helical transmembrane segment spans residues 216–236 (LLLFTSATYLYLGQFHLDVFF). Residues 237-267 (QDEFNCFIKTGLLHDETHVPELITCRLTSLS) are Extracellular-facing. The helical transmembrane segment at 268-288 (VFQIVSVSSAAIYTILVPVII) threads the bilayer. At 289-392 (YNLTRLCRWD…LTQHTYDEHA (104 aa)) the chain is on the cytoplasmic side.

Belongs to the pannexin family. As to quaternary structure, homoheptameric. In terms of processing, N-glycosylation may play a role in cell surface targeting. In terms of tissue distribution, expressed in skin, cartilage, heart, lung, liver, spleen, thymus and kidney. Not expressed in brain. Expressed in calvarial cells.

The protein resides in the cell membrane. Its subcellular location is the endoplasmic reticulum membrane. The enzyme catalyses Ca(2+)(in) = Ca(2+)(out). It carries out the reaction ATP(in) = ATP(out). Regulator of osteoblast differentiation by functionning as a Ca(2+) channel in the endoplasmic reticulum which regulates calmodulin (CaM) pathways. Allows ATP release into the extracellular space and activation or purinergic receptors. The polypeptide is Pannexin-3 (Panx3) (Mus musculus (Mouse)).